A 136-amino-acid polypeptide reads, in one-letter code: Histone H3 (136 aa).

It belongs to the histone H3 family. The nucleosome is a histone octamer containing two molecules each of H2A, H2B, H3 and H4 assembled in one H3-H4 heterotetramer and two H2A-H2B heterodimers. The octamer wraps approximately 147 bp of DNA.

The protein localises to the nucleomorph. It localises to the chromosome. In terms of biological role, core component of nucleosome. Nucleosomes wrap and compact DNA into chromatin, limiting DNA accessibility to the cellular machineries which require DNA as a template. Histones thereby play a central role in transcription regulation, DNA repair, DNA replication and chromosomal stability. DNA accessibility is regulated via a complex set of post-translational modifications of histones, also called histone code, and nucleosome remodeling. The chain is Histone H3 from Guillardia theta (Cryptophyte).